Reading from the N-terminus, the 1895-residue chain is MSYNDPNLNGQYYSNGDGTGDGNYPTYQVTQDQSAYDEYGQPIYTQNQLDDGYYDPNEQYVDGTQFPQGQDPSQDQGPYNNDASYYNQPPNMMNPSSQDGENFSDFSSYGPPSGTYPNDQYTPSQMSYPDQDGSSGASTPYGNGVVNGNGQYYDPNAIEMALPNDPYPAWTADPQSPLPIEQIEDIFIDLTNKFGFQRDSMRNMFDHFMTLLDSRSSRMSPEQALLSLHADYIGGDTANYKKWYFAAQLDMDDEIGFRNMKLGKLSRKARKAKKKNKKAMQEASPEDTEETLNQIEGDNSLEAADFRWKSKMNQLSPFEMVRQIALFLLCWGEANQVRFTPECLCFIYKCASDYLDSAQCQQRPDPLPEGDFLNRVITPLYRFIRSQVYEIVDGRYVKSEKDHNKVIGYDDVNQLFWYPEGIAKIVMEDGTRLIDLPAEERYLKLGEIPWDDVFFKTYKETRSWLHLVTNFNRIWIMHISVYWMYCAYNAPTFYTHNYQQLVDNQPLAAYKWATAALGGTVASLIQVAATLCEWSFVPRKWAGAQHLSRRFWFLCVIMGINLGPVIFVFAYDKDTVYSTAAHVVGAVMFFVAVATLVFFSVMPLGGLFTSYMKKSTRSYVASQTFTASFAPLHGLDRWMSYLVWVTVFAAKYAESYFFLILSLRDPIRILSTTSMRCTGEYWWGNKICKVQPKIVLGLMIATDFILFFLDTYLWYIVVNTVFSVGKSFYLGISILTPWRNIFTRLPKRIYSKILATTDMEIKYKPKVLISQIWNAIIISMYREHLLAIDHVQKLLYHQVPSEIEGKRTLRAPTFFVSQDDNNFETEFFPRDSEAERRISFFAQSLSTPIPEPLPVDNMPTFTVLTPHYAERILLSLREIIREDDQFSRVTLLEYLKQLHPVEWDCFVKDTKILAEETAAYENNEDEPEKEDALKSQIDDLPFYCIGFKSAAPEYTLRTRIWASLRSQTLYRTISGFMNYSRAIKLLYRVENPEIVQMFGGNADGLERELEKMARRKFKFLVSMQRLAKFKPHELENAEFLLRAYPDLQIAYLDEEPPLNEGEEPRIYSALIDGHCEILENGRRRPKFRVQLSGNPILGDGKSDNQNHALIFYRGEYIQLIDANQDNYLEECLKIRSVLAEFEELGIEQIHPYTPGLKYEDQSTNHPVAIVGAREYIFSENSGVLGDVAAGKEQTFGTLFARTLAQIGGKLHYGHPDFINATFMTTRGGVSKAQKGLHLNEDIYAGMNAVLRGGRIKHCEYYQCGKGRDLGFGTILNFTTKIGAGMGEQMLSREYYYLGTQLPIDRFLTFYYAHPGFHLNNLFIQLSLQMFMLTLVNLHALAHESILCVYDRDKPITDVLYPIGCYNFHPAIDWVRRYTLSIFIVFWIAFVPIVVQELIERGLWKATQRFFRHILSLSPMFEVFAGQIYSSALLSDIAVGGARYISTGRGFATSRIPFSILYSRFAGSAIYMGSRSMLMLLFGTVAHWQAPLLWFWASLSALIFAPFIFNPHQFAWEDFFLDYRDYIRWLSRGNNKYHRNSWIGYVRMSRSRVTGFKRKLVGDESEKSAGDASRAHRTNLIMAEIIPCAIYAAGCFIAFTFINAQTGVKTTDEDRVNSTLRIIICTLAPIVIDIGVLFFCMGLSCCSGPLLGMCCKKTGSVMAGIAHGIAVVVHIVFFIVMWVLEGFSFVRMLIGVVTCIQCQRLIFHCMTVLLLTREFKNDHANTAFWTGKWYSTGLGYMAWTQPTRELTAKVIELSEFAADFVLGHVILIFQLPVICIPKIDKFHSIMLFWLKPSRQIRPPIYSLKQARLRKRMVRRYCSLYFLVLIIFAGCIVGPAVASAHVPKDLGSGLTGTFHNLVQPRNVSNNDTGSQMSTYKSHYYTHTPSLKTWSTIK.

2 stretches are compositionally biased toward polar residues: residues 1 to 16 (MSYN…YSNG) and 25 to 34 (PTYQVTQDQS). Disordered stretches follow at residues 1–143 (MSYN…PYGN) and 269–292 (ARKA…EETL). Residues 1–473 (MSYNDPNLNG…WLHLVTNFNR (473 aa)) are Extracellular-facing. Low complexity predominate over residues 65-78 (QFPQGQDPSQDQGP). Composition is skewed to polar residues over residues 79–107 (YNND…SDFS) and 115–141 (TYPN…STPY). Positions 269–278 (ARKAKKKNKK) are enriched in basic residues. Residue Lys-278 forms a Glycyl lysine isopeptide (Lys-Gly) (interchain with G-Cter in ubiquitin) linkage. Residues Thr-288 and Thr-291 each carry the phosphothreonine modification. Lys-405 participates in a covalent cross-link: Glycyl lysine isopeptide (Lys-Gly) (interchain with G-Cter in ubiquitin). The helical transmembrane segment at 474 to 494 (IWIMHISVYWMYCAYNAPTFY) threads the bilayer. The Cytoplasmic segment spans residues 495–511 (THNYQQLVDNQPLAAYK). Residues 512 to 532 (WATAALGGTVASLIQVAATLC) form a helical membrane-spanning segment. Residues 533 to 550 (EWSFVPRKWAGAQHLSRR) lie on the Extracellular side of the membrane. Residues 551-571 (FWFLCVIMGINLGPVIFVFAY) form a helical membrane-spanning segment. The Cytoplasmic portion of the chain corresponds to 572–582 (DKDTVYSTAAH). The helical transmembrane segment at 583 to 603 (VVGAVMFFVAVATLVFFSVMP) threads the bilayer. Over 604–1579 (LGGLFTSYMK…DASRAHRTNL (976 aa)) the chain is Extracellular. Glycyl lysine isopeptide (Lys-Gly) (interchain with G-Cter in ubiquitin) cross-links involve residues Lys-929, Lys-934, Lys-1558, and Lys-1566. A helical transmembrane segment spans residues 1580-1600 (IMAEIIPCAIYAAGCFIAFTF). At 1601 to 1620 (INAQTGVKTTDEDRVNSTLR) the chain is on the cytoplasmic side. A helical membrane pass occupies residues 1621–1641 (IIICTLAPIVIDIGVLFFCMG). The Extracellular portion of the chain corresponds to 1642-1758 (LSCCSGPLLG…LTAKVIELSE (117 aa)). A helical membrane pass occupies residues 1759–1779 (FAADFVLGHVILIFQLPVICI). Over 1780 to 1821 (PKIDKFHSIMLFWLKPSRQIRPPIYSLKQARLRKRMVRRYCS) the chain is Cytoplasmic. The chain crosses the membrane as a helical span at residues 1822–1842 (LYFLVLIIFAGCIVGPAVASA). Residues 1843-1895 (HVPKDLGSGLTGTFHNLVQPRNVSNNDTGSQMSTYKSHYYTHTPSLKTWSTIK) lie on the Extracellular side of the membrane.

This sequence belongs to the glycosyltransferase 48 family. As to quaternary structure, component of the 1,3-beta-glucan synthase (GS) complex, composed of two alternate catalytic subunits FKS1 or GSC2, and a regulatory subunit RHO1. Interacts with SMK1.

The protein localises to the membrane. It carries out the reaction [(1-&gt;3)-beta-D-glucosyl](n) + UDP-alpha-D-glucose = [(1-&gt;3)-beta-D-glucosyl](n+1) + UDP + H(+). Functionally, alternate catalytic subunit of the 1,3-beta-glucan synthase (GS) complex. Synthesizes 1,3-beta-glucan, a major structural component of the yeast cell wall. Required for spore wall assembly. Negative regulation of activity by SMK1 is important for spore wall deposition. Activity is positively regulated by RHO1. The chain is 1,3-beta-glucan synthase component GSC2 from Saccharomyces cerevisiae (strain ATCC 204508 / S288c) (Baker's yeast).